The primary structure comprises 498 residues: Neuronal acetylcholine receptor subunit beta-4 (498 aa).

The signal sequence occupies residues 1-21; that stretch reads MRRAPSLVLFFLVALCGRGNC. The Extracellular portion of the chain corresponds to 22–239; it reads RVANAEEKLM…RKPLFYTINL (218 aa). N-linked (GlcNAc...) asparagine glycans are attached at residues Asn36, Asn93, Asn138, and Asn166. Cys153 and Cys167 are disulfide-bonded. The helical transmembrane segment at 240–255 threads the bilayer; the sequence is IIPCVLTTLLAILVFY. The Cytoplasmic portion of the chain corresponds to 256–261; that stretch reads LPSDCG. Residue Glu262 participates in Na(+) binding. The helical transmembrane segment at 262–277 threads the bilayer; the sequence is EKMTLCISVLLALTFF. Residues 278–296 are Extracellular-facing; the sequence is LLLISKIVPPTSLDVPLIG. A helical transmembrane segment spans residues 297–321; it reads KYLMFTMVLVTFSIVTSVCVLNVHH. Residues 322 to 454 are Cytoplasmic-facing; it reads RSPSTHTMAP…QSVVEDWKYV (133 aa). The interval 357–377 is disordered; that stretch reads ARAFPPSKSCVTKPEATATST. A helical transmembrane segment spans residues 455 to 478; it reads AMVVDRLFLWVFMFVCVLGTVGLF. Over 479–498 the chain is Extracellular; it reads LPPLFQTHAASEGPYAAQRD.

The protein belongs to the ligand-gated ion channel (TC 1.A.9) family. Acetylcholine receptor (TC 1.A.9.1) subfamily. Beta-4/CHRNB4 sub-subfamily. As to quaternary structure, neuronal AChR is composed of two different types of subunits: alpha and beta. CHRNB4/Beta-4 subunit can be combined to CHRNA2/alpha-2, CHRNA3/alpha-3 or CHRNA4/alpha-4, CHRNA5/alpha-5 and CHRNB3/beta-3 to give rise to functional receptors. Forms stoichiometries such as (CHRNA3)2:(CHRNB4)3 or (CHRNA3:CHRNB4)2:CHRNB3. Interacts with RIC3; which is required for proper folding and assembly. Interacts with LYPD6.

The protein localises to the synaptic cell membrane. Its subcellular location is the cell membrane. It carries out the reaction Ca(2+)(in) = Ca(2+)(out). It catalyses the reaction K(+)(in) = K(+)(out). The enzyme catalyses Na(+)(in) = Na(+)(out). Activated by a myriad of ligands such as acetylcholine, cytisine, nicotine, choline and epibatidine. The heteropentamer CHRNA3:CHRNB4 activity is blocked by the alpha-conotoxin ImI and AuIB. In terms of biological role, component of neuronal acetylcholine receptors (nAChRs) that function as pentameric, ligand-gated cation channels with high calcium permeability among other activities. nAChRs are excitatory neurotrasnmitter receptors formed by a collection of nAChR subunits known to mediate synaptic transmission in the nervous system and the neuromuscular junction. Each nAchR subunit confers differential attributes to channel properties, including activation, deactivation and desensitization kinetics, pH sensitivity, cation permeability, and binding to allosteric modulators. CHRNB4 forms heteropentameric neuronal acetylcholine receptors with CHRNA2, CHRNA3 and CHRNA4, as well as CHRNA5 and CHRNB3 as accesory subunits. CHRNA3:CHRNB4 being predominant in neurons of the autonomic ganglia, it is known as ganglionic nicotinic receptor. CHRNA3:CHRNB4 or CHRNA3:CHRNA5:CHRNB4 play also an important role in the habenulo-interpeduncular tract, modulating the mesolimbic dopamine system and affecting reward circuits and addiction. Hypothalamic CHRNA3:CHRNB4 nAChR activation by nicotine leads to activation of POMC neurons and a decrease in food intake. In Homo sapiens (Human), this protein is Neuronal acetylcholine receptor subunit beta-4.